Reading from the N-terminus, the 160-residue chain is 2-C-methyl-D-erythritol 2,4-cyclodiphosphate synthase (160 aa).

A divalent metal cation contacts are provided by Asp11 and His13. 4-CDP-2-C-methyl-D-erythritol 2-phosphate is bound by residues 11–13 and 37–38; these read DVH and HS. His45 contributes to the a divalent metal cation binding site. Residues 59-61, 64-68, 103-109, 135-138, Phe142, and Arg145 each bind 4-CDP-2-C-methyl-D-erythritol 2-phosphate; these read DIG, FPDTD, AQAPKMA, and TTTE.

The protein belongs to the IspF family. Homotrimer. A divalent metal cation is required as a cofactor.

The catalysed reaction is 4-CDP-2-C-methyl-D-erythritol 2-phosphate = 2-C-methyl-D-erythritol 2,4-cyclic diphosphate + CMP. It participates in isoprenoid biosynthesis; isopentenyl diphosphate biosynthesis via DXP pathway; isopentenyl diphosphate from 1-deoxy-D-xylulose 5-phosphate: step 4/6. Functionally, involved in the biosynthesis of isopentenyl diphosphate (IPP) and dimethylallyl diphosphate (DMAPP), two major building blocks of isoprenoid compounds. Catalyzes the conversion of 4-diphosphocytidyl-2-C-methyl-D-erythritol 2-phosphate (CDP-ME2P) to 2-C-methyl-D-erythritol 2,4-cyclodiphosphate (ME-CPP) with a corresponding release of cytidine 5-monophosphate (CMP). This is 2-C-methyl-D-erythritol 2,4-cyclodiphosphate synthase from Thioalkalivibrio sulfidiphilus (strain HL-EbGR7).